The chain runs to 455 residues: tRNA modification GTPase MnmE (455 aa).

R26, E86, and R125 together coordinate (6S)-5-formyl-5,6,7,8-tetrahydrofolate. A TrmE-type G domain is found at 222–376 (GLKTAIIGRP…VEEKINQIFF (155 aa)). Residue N232 coordinates K(+). Residues 232–237 (NVGKSS), 251–257 (TDIAGTT), and 276–279 (DTAG) contribute to the GTP site. A Mg(2+)-binding site is contributed by S236. The K(+) site is built by T251, I253, and T256. Residue T257 participates in Mg(2+) binding. K455 contacts (6S)-5-formyl-5,6,7,8-tetrahydrofolate.

This sequence belongs to the TRAFAC class TrmE-Era-EngA-EngB-Septin-like GTPase superfamily. TrmE GTPase family. Homodimer. Heterotetramer of two MnmE and two MnmG subunits. K(+) is required as a cofactor.

The protein resides in the cytoplasm. Exhibits a very high intrinsic GTPase hydrolysis rate. Involved in the addition of a carboxymethylaminomethyl (cmnm) group at the wobble position (U34) of certain tRNAs, forming tRNA-cmnm(5)s(2)U34. The polypeptide is tRNA modification GTPase MnmE (Lactococcus lactis subsp. cremoris (strain SK11)).